We begin with the raw amino-acid sequence, 442 residues long: 3-phosphoshikimate 1-carboxyvinyltransferase (442 aa).

3-phosphoshikimate contacts are provided by Lys-25, Ser-26, and Arg-30. Lys-25 is a phosphoenolpyruvate binding site. The phosphoenolpyruvate site is built by Gly-97 and Arg-125. Residues Ser-170, Gln-172, Asp-323, and Lys-350 each contribute to the 3-phosphoshikimate site. Residue Gln-172 coordinates phosphoenolpyruvate. The active-site Proton acceptor is Asp-323. Positions 354 and 399 each coordinate phosphoenolpyruvate.

The protein belongs to the EPSP synthase family. As to quaternary structure, monomer.

The protein localises to the cytoplasm. It carries out the reaction 3-phosphoshikimate + phosphoenolpyruvate = 5-O-(1-carboxyvinyl)-3-phosphoshikimate + phosphate. It participates in metabolic intermediate biosynthesis; chorismate biosynthesis; chorismate from D-erythrose 4-phosphate and phosphoenolpyruvate: step 6/7. Functionally, catalyzes the transfer of the enolpyruvyl moiety of phosphoenolpyruvate (PEP) to the 5-hydroxyl of shikimate-3-phosphate (S3P) to produce enolpyruvyl shikimate-3-phosphate and inorganic phosphate. In Bartonella quintana (strain Toulouse) (Rochalimaea quintana), this protein is 3-phosphoshikimate 1-carboxyvinyltransferase.